Reading from the N-terminus, the 764-residue chain is Sesterfisherol synthase (764 aa).

Residues 2 to 331 (EVWEHSRPIA…SPRHHAWRNN (330 aa)) are terpene cyclase. A Mg(2+)-binding site is contributed by Asp95. Substrate is bound by residues Asp95, 187–190 (RRDD), Asn231, 235–239 (SFDRE), and 324–325 (RH). The DDXXD 1 motif lies at 95–99 (DDGYE). Residues 231–239 (NDYWSFDRE) carry the NSE/DTE motif. Residues 332–759 (SRNGLKPANH…PMLRLLLEKL (428 aa)) form a prenyltransferase region. The segment at 347 to 372 (LITPSNNLNSSKGSEEQMQDSDNGTR) is disordered. Over residues 348 to 358 (ITPSNNLNSSK) the composition is skewed to polar residues. Residues Lys476, Arg479, and His508 each coordinate isopentenyl diphosphate. Mg(2+) is bound by residues Asp515 and Asp519. A DDXXD 2 motif is present at residues 515-519 (DDIED). A dimethylallyl diphosphate-binding site is contributed by Arg524. Arg525 contributes to the isopentenyl diphosphate binding site. Dimethylallyl diphosphate contacts are provided by Lys602, Thr603, Gln638, Asn645, Lys655, and Lys665.

In the N-terminal section; belongs to the terpene synthase family. It in the C-terminal section; belongs to the FPP/GGPP synthase family. Hexamer. It depends on Mg(2+) as a cofactor.

It catalyses the reaction isopentenyl diphosphate + (2E,6E)-farnesyl diphosphate = (2E,6E,10E)-geranylgeranyl diphosphate + diphosphate. The catalysed reaction is isopentenyl diphosphate + (2E,6E,10E)-geranylgeranyl diphosphate = (2E,6E,10E,14E)-geranylfarnesyl diphosphate + diphosphate. It carries out the reaction (2E,6E,10E,14E)-geranylfarnesyl diphosphate + H2O = sesterfisherol + diphosphate. It participates in secondary metabolite biosynthesis; terpenoid biosynthesis. In terms of biological role, bifunctional terpene synthase; part of the gene cluster that mediates the biosynthesis of sesterfisheric acid. The bifunctional terpene synthase NfSS converts dimethylallyl diphosphate (DMAPP) and isopentenyl diphosphate (IPP) into sesterfisherol. The C-terminal prenyltransferase (PT) domain of NfSS catalyzes formation of geranylfarnesyl pyrophosphate (GFPP), whereas the N-terminal terpene cyclase (TC) domain catalyzes the cyclization of GFPP to sesterfisherol. The cytochrome P450 monooxygenase NfP450 then catalyzes oxidative modifications of sesterfisherol into sesterfisheric acid. This chain is Sesterfisherol synthase, found in Neosartorya fischeri (strain ATCC 1020 / DSM 3700 / CBS 544.65 / FGSC A1164 / JCM 1740 / NRRL 181 / WB 181) (Aspergillus fischerianus).